A 362-amino-acid chain; its full sequence is Putative gustatory receptor 89a (362 aa).

Residues 1–38 are Cytoplasmic-facing; sequence MLRFPHVCGLCLLLKYWQILALAPFRTSEPMVARCQRW. The chain crosses the membrane as a helical span at residues 39-59; it reads MTLIAVFRWLLLTSMAPFVLW. Over 60–74 the chain is Extracellular; it reads KSAAMYEATNVRHSM. The helical transmembrane segment at 75–95 threads the bilayer; that stretch reads VFKTIALATMTGDVCISLALL. At 96–126 the chain is on the cytoplasmic side; sequence GNHLWNRRELANLVNDLARLHRRRRLSWWST. Residues 127-147 form a helical membrane-spanning segment; sequence LFLWLKLLLSLYDLLCSVPFL. At 148–166 the chain is on the extracellular side; the sequence is KGAGGRLPWSQLVAYGVQL. Residues 167–187 form a helical membrane-spanning segment; sequence YFQHVASVYGNGIFGGILLML. Residues 188–223 are Cytoplasmic-facing; that stretch reads ECYNQLEREEPTNLARLLQKEYSWLRLIQRFVKLFQ. A helical membrane pass occupies residues 224–244; that stretch reads LGIFLLVLGSFVNIMVNIYAF. Topologically, residues 245 to 255 are extracellular; that stretch reads MSYYVSLHGVP. Residues 256–276 form a helical membrane-spanning segment; sequence LTISNNCLVLAIQLYAVILAA. Residues 277–333 are Cytoplasmic-facing; it reads HLCQVRSAKLRKKCLQLEYVPEGLTQEQAMASTPFPVLTPTGNVKFRILGVFILDNS. Residues 334–354 form a helical membrane-spanning segment; that stretch reads FWLFLVSYAMNFIVVILQTSF. Over 355–362 the chain is Extracellular; that stretch reads EHINHGEI.

This sequence belongs to the insect chemoreceptor superfamily. Gustatory receptor (GR) family. Gr77a subfamily.

It is found in the cell membrane. Its function is as follows. Probable gustatory receptor which mediates acceptance or avoidance behavior, depending on its substrates. This is Putative gustatory receptor 89a (Gr89a) from Drosophila melanogaster (Fruit fly).